Consider the following 373-residue polypeptide: UDP-N-acetylglucosamine--N-acetylmuramyl-(pentapeptide) pyrophosphoryl-undecaprenol N-acetylglucosamine transferase (373 aa).

Residues 16-18 (TGG), Asn-128, Arg-164, Ser-192, Ile-250, and Gln-295 each bind UDP-N-acetyl-alpha-D-glucosamine.

Belongs to the glycosyltransferase 28 family. MurG subfamily.

Its subcellular location is the cell inner membrane. The catalysed reaction is di-trans,octa-cis-undecaprenyl diphospho-N-acetyl-alpha-D-muramoyl-L-alanyl-D-glutamyl-meso-2,6-diaminopimeloyl-D-alanyl-D-alanine + UDP-N-acetyl-alpha-D-glucosamine = di-trans,octa-cis-undecaprenyl diphospho-[N-acetyl-alpha-D-glucosaminyl-(1-&gt;4)]-N-acetyl-alpha-D-muramoyl-L-alanyl-D-glutamyl-meso-2,6-diaminopimeloyl-D-alanyl-D-alanine + UDP + H(+). Its pathway is cell wall biogenesis; peptidoglycan biosynthesis. Cell wall formation. Catalyzes the transfer of a GlcNAc subunit on undecaprenyl-pyrophosphoryl-MurNAc-pentapeptide (lipid intermediate I) to form undecaprenyl-pyrophosphoryl-MurNAc-(pentapeptide)GlcNAc (lipid intermediate II). This chain is UDP-N-acetylglucosamine--N-acetylmuramyl-(pentapeptide) pyrophosphoryl-undecaprenol N-acetylglucosamine transferase, found in Paraburkholderia phymatum (strain DSM 17167 / CIP 108236 / LMG 21445 / STM815) (Burkholderia phymatum).